We begin with the raw amino-acid sequence, 208 residues long: ATP-dependent Clp protease proteolytic subunit (208 aa).

The active-site Nucleophile is the serine 105. Residue histidine 130 is part of the active site.

Belongs to the peptidase S14 family. Fourteen ClpP subunits assemble into 2 heptameric rings which stack back to back to give a disk-like structure with a central cavity, resembling the structure of eukaryotic proteasomes.

It localises to the cytoplasm. The catalysed reaction is Hydrolysis of proteins to small peptides in the presence of ATP and magnesium. alpha-casein is the usual test substrate. In the absence of ATP, only oligopeptides shorter than five residues are hydrolyzed (such as succinyl-Leu-Tyr-|-NHMec, and Leu-Tyr-Leu-|-Tyr-Trp, in which cleavage of the -Tyr-|-Leu- and -Tyr-|-Trp bonds also occurs).. Functionally, cleaves peptides in various proteins in a process that requires ATP hydrolysis. Has a chymotrypsin-like activity. Plays a major role in the degradation of misfolded proteins. This Xylella fastidiosa (strain M23) protein is ATP-dependent Clp protease proteolytic subunit.